The primary structure comprises 392 residues: GTPase Obg (392 aa).

One can recognise an Obg domain in the interval 1-159 (MKFVDEAEIR…RNLKLELMLL (159 aa)). Positions 121–146 (GFHGLGNTRFKSSTNRAPRQKTNGTP) are disordered. A compositionally biased stretch (polar residues) spans 129-145 (RFKSSTNRAPRQKTNGT). Residues 160 to 333 (ADVGLLGMPN…LCNDVMDFIE (174 aa)) form the OBG-type G domain. GTP contacts are provided by residues 166-173 (GMPNAGKS), 191-195 (FTTLV), 213-216 (DIPG), 283-286 (NKVD), and 314-316 (SAF). Mg(2+) contacts are provided by S173 and T193.

The protein belongs to the TRAFAC class OBG-HflX-like GTPase superfamily. OBG GTPase family. As to quaternary structure, monomer. The cofactor is Mg(2+).

Its subcellular location is the cytoplasm. In terms of biological role, an essential GTPase which binds GTP, GDP and possibly (p)ppGpp with moderate affinity, with high nucleotide exchange rates and a fairly low GTP hydrolysis rate. Plays a role in control of the cell cycle, stress response, ribosome biogenesis and in those bacteria that undergo differentiation, in morphogenesis control. This is GTPase Obg from Alteromonas mediterranea (strain DSM 17117 / CIP 110805 / LMG 28347 / Deep ecotype).